The chain runs to 1353 residues: DNA-directed RNA polymerase subunit beta' (1353 aa).

Residues 1-117 (MSDNRLFTSV…AFQKLNDLFK (117 aa)) form a unknown region. The segment at 118–1353 (LYNHFPSISS…SELAEKTNQN (1236 aa)) is DNA-directed RNA polymerase subunit beta'. Zn(2+)-binding residues include cysteine 189, cysteine 191, cysteine 203, and cysteine 206. Residues aspartate 578, aspartate 580, and aspartate 582 each contribute to the Mg(2+) site.

It belongs to the RNA polymerase beta' chain family. As to quaternary structure, the RNAP catalytic core consists of 2 alpha, 1 beta, 1 beta' and 1 omega subunit. When a sigma factor is associated with the core the holoenzyme is formed, which can initiate transcription. The cofactor is Mg(2+). Requires Zn(2+) as cofactor.

The catalysed reaction is RNA(n) + a ribonucleoside 5'-triphosphate = RNA(n+1) + diphosphate. Its function is as follows. DNA-dependent RNA polymerase catalyzes the transcription of DNA into RNA using the four ribonucleoside triphosphates as substrates. This Onion yellows phytoplasma (strain OY-M) protein is DNA-directed RNA polymerase subunit beta'.